The chain runs to 474 residues: Chromosomal replication initiator protein DnaA (474 aa).

The interval 1 to 91 is domain I, interacts with DnaA modulators; sequence MSEELWQRCL…STRASTPAAS (91 aa). The segment at 89–138 is disordered; that stretch reads AASYFNGSSSSSSNGPITTPAAAPAPRQPESDSRPQPTSLGGARKHRSNL. Residues 91–136 are domain II; sequence SYFNGSSSSSSNGPITTPAAAPAPRQPESDSRPQPTSLGGARKHRS. Positions 96–113 are enriched in low complexity; sequence SSSSSSNGPITTPAAAPA. A domain III, AAA+ region region spans residues 137-354; that stretch reads NLNTGFTFST…GALRRVIAHV (218 aa). Residues Gly182, Gly184, Lys185, and Thr186 each contribute to the ATP site. The interval 355-474 is domain IV, binds dsDNA; sequence RFTGAQIDIG…YLNLLRTLTS (120 aa).

This sequence belongs to the DnaA family. Oligomerizes as a right-handed, spiral filament on DNA at oriC.

Its subcellular location is the cytoplasm. Its function is as follows. Plays an essential role in the initiation and regulation of chromosomal replication. ATP-DnaA binds to the origin of replication (oriC) to initiate formation of the DNA replication initiation complex once per cell cycle. Binds the DnaA box (a 9 base pair repeat at the origin) and separates the double-stranded (ds)DNA. Forms a right-handed helical filament on oriC DNA; dsDNA binds to the exterior of the filament while single-stranded (ss)DNA is stabiized in the filament's interior. The ATP-DnaA-oriC complex binds and stabilizes one strand of the AT-rich DNA unwinding element (DUE), permitting loading of DNA polymerase. After initiation quickly degrades to an ADP-DnaA complex that is not apt for DNA replication. Binds acidic phospholipids. The sequence is that of Chromosomal replication initiator protein DnaA from Alcanivorax borkumensis (strain ATCC 700651 / DSM 11573 / NCIMB 13689 / SK2).